The primary structure comprises 181 residues: Iron sulfur cluster assembly protein 1, mitochondrial (181 aa).

The tract at residues 159 to 181 (RKTKNPTLGAEAAETPAAATATA) is disordered. Residues 168-181 (AEAAETPAAATATA) show a composition bias toward low complexity.

The protein belongs to the NifU family. As to quaternary structure, component of the core Fe-S cluster (ISC) assembly machinery. Requires [2Fe-2S] cluster as cofactor.

It localises to the mitochondrion matrix. Its pathway is cofactor biosynthesis; iron-sulfur cluster biosynthesis. Scaffold protein for the de novo synthesis of iron-sulfur (Fe-S) clusters within mitochondria, which is required for maturation of both mitochondrial and cytoplasmic [2Fe-2S] and [4Fe-4S] proteins. First, a [2Fe-2S] cluster is transiently assembled on the scaffold protein ISU1. In a second step, the cluster is released from ISU1, transferred to a glutaredoxin, followed by the formation of mitochondrial [2Fe-2S] proteins, the synthesis of [4Fe-4S] clusters and their target-specific insertion into the recipient apoproteins. Cluster assembly on ISU1 depends on the function of the cysteine desulfurase complex NFS1-ISD11, which serves as the sulfur donor for cluster synthesis, the iron-binding protein frataxin as the putative iron donor, and the electron transfer chain comprised of ferredoxin reductase and ferredoxin, which receive their electrons from NADH. The polypeptide is Iron sulfur cluster assembly protein 1, mitochondrial (ISU1) (Yarrowia lipolytica (strain CLIB 122 / E 150) (Yeast)).